The sequence spans 312 residues: Ornithine carbamoyltransferase (312 aa).

Carbamoyl phosphate contacts are provided by residues 59–62, glutamine 86, arginine 110, and 137–140; these read STRT and HPCQ. Residues asparagine 167, aspartate 231, and 235–236 each bind L-ornithine; that span reads SM. Carbamoyl phosphate contacts are provided by cysteine 271 and arginine 299.

It belongs to the aspartate/ornithine carbamoyltransferase superfamily. OTCase family.

The protein resides in the cytoplasm. It catalyses the reaction carbamoyl phosphate + L-ornithine = L-citrulline + phosphate + H(+). The protein operates within amino-acid biosynthesis; L-arginine biosynthesis; L-arginine from L-ornithine and carbamoyl phosphate: step 1/3. Reversibly catalyzes the transfer of the carbamoyl group from carbamoyl phosphate (CP) to the N(epsilon) atom of ornithine (ORN) to produce L-citrulline. The chain is Ornithine carbamoyltransferase from Methanopyrus kandleri (strain AV19 / DSM 6324 / JCM 9639 / NBRC 100938).